The sequence spans 275 residues: 4-diphosphocytidyl-2-C-methyl-D-erythritol kinase (275 aa).

The active site involves K14. Position 98-108 (98-108) interacts with ATP; it reads PMGAGLGGGSS. D140 is an active-site residue.

It belongs to the GHMP kinase family. IspE subfamily.

The enzyme catalyses 4-CDP-2-C-methyl-D-erythritol + ATP = 4-CDP-2-C-methyl-D-erythritol 2-phosphate + ADP + H(+). It functions in the pathway isoprenoid biosynthesis; isopentenyl diphosphate biosynthesis via DXP pathway; isopentenyl diphosphate from 1-deoxy-D-xylulose 5-phosphate: step 3/6. In terms of biological role, catalyzes the phosphorylation of the position 2 hydroxy group of 4-diphosphocytidyl-2C-methyl-D-erythritol. The protein is 4-diphosphocytidyl-2-C-methyl-D-erythritol kinase of Francisella tularensis subsp. holarctica (strain FTNF002-00 / FTA).